The primary structure comprises 315 residues: Homoserine kinase (315 aa).

Residue 97-107 participates in ATP binding; it reads PPARGLGSSAT.

This sequence belongs to the GHMP kinase family. Homoserine kinase subfamily.

The protein resides in the cytoplasm. It carries out the reaction L-homoserine + ATP = O-phospho-L-homoserine + ADP + H(+). Its pathway is amino-acid biosynthesis; L-threonine biosynthesis; L-threonine from L-aspartate: step 4/5. In terms of biological role, catalyzes the ATP-dependent phosphorylation of L-homoserine to L-homoserine phosphate. In Prochlorococcus marinus (strain NATL1A), this protein is Homoserine kinase.